The primary structure comprises 457 residues: Argininosuccinate lyase (457 aa).

This sequence belongs to the lyase 1 family. Argininosuccinate lyase subfamily.

The protein resides in the cytoplasm. It catalyses the reaction 2-(N(omega)-L-arginino)succinate = fumarate + L-arginine. It functions in the pathway amino-acid biosynthesis; L-arginine biosynthesis; L-arginine from L-ornithine and carbamoyl phosphate: step 3/3. The polypeptide is Argininosuccinate lyase (Staphylococcus carnosus (strain TM300)).